We begin with the raw amino-acid sequence, 227 residues long: Cytochrome c oxidase subunit 2 (227 aa).

Topologically, residues 1–14 (MAYPMQLGLQDATS) are mitochondrial intermembrane. Residues 15 to 45 (PIMEELLHFHDHTLMIVFLISSLVLYIISLM) form a helical membrane-spanning segment. Residues 46–59 (LTTKLTHTSTMDAQ) lie on the Mitochondrial matrix side of the membrane. A helical membrane pass occupies residues 60–87 (EVETIWTILPAIILIMIALPSLRILYMM). Residues 88-227 (DEINNPSLTV…HFEKWSASML (140 aa)) lie on the Mitochondrial intermembrane side of the membrane. Residues His161, Cys196, Glu198, Cys200, His204, and Met207 each contribute to the Cu cation site. Glu198 contacts Mg(2+).

It belongs to the cytochrome c oxidase subunit 2 family. As to quaternary structure, component of the cytochrome c oxidase (complex IV, CIV), a multisubunit enzyme composed of 14 subunits. The complex is composed of a catalytic core of 3 subunits MT-CO1, MT-CO2 and MT-CO3, encoded in the mitochondrial DNA, and 11 supernumerary subunits COX4I, COX5A, COX5B, COX6A, COX6B, COX6C, COX7A, COX7B, COX7C, COX8 and NDUFA4, which are encoded in the nuclear genome. The complex exists as a monomer or a dimer and forms supercomplexes (SCs) in the inner mitochondrial membrane with NADH-ubiquinone oxidoreductase (complex I, CI) and ubiquinol-cytochrome c oxidoreductase (cytochrome b-c1 complex, complex III, CIII), resulting in different assemblies (supercomplex SCI(1)III(2)IV(1) and megacomplex MCI(2)III(2)IV(2)). Found in a complex with TMEM177, COA6, COX18, COX20, SCO1 and SCO2. Interacts with TMEM177 in a COX20-dependent manner. Interacts with COX20. Interacts with COX16. Cu cation serves as cofactor.

It localises to the mitochondrion inner membrane. The catalysed reaction is 4 Fe(II)-[cytochrome c] + O2 + 8 H(+)(in) = 4 Fe(III)-[cytochrome c] + 2 H2O + 4 H(+)(out). Component of the cytochrome c oxidase, the last enzyme in the mitochondrial electron transport chain which drives oxidative phosphorylation. The respiratory chain contains 3 multisubunit complexes succinate dehydrogenase (complex II, CII), ubiquinol-cytochrome c oxidoreductase (cytochrome b-c1 complex, complex III, CIII) and cytochrome c oxidase (complex IV, CIV), that cooperate to transfer electrons derived from NADH and succinate to molecular oxygen, creating an electrochemical gradient over the inner membrane that drives transmembrane transport and the ATP synthase. Cytochrome c oxidase is the component of the respiratory chain that catalyzes the reduction of oxygen to water. Electrons originating from reduced cytochrome c in the intermembrane space (IMS) are transferred via the dinuclear copper A center (CU(A)) of subunit 2 and heme A of subunit 1 to the active site in subunit 1, a binuclear center (BNC) formed by heme A3 and copper B (CU(B)). The BNC reduces molecular oxygen to 2 water molecules using 4 electrons from cytochrome c in the IMS and 4 protons from the mitochondrial matrix. In Damaliscus pygargus phillipsi (Blesbok), this protein is Cytochrome c oxidase subunit 2 (MT-CO2).